We begin with the raw amino-acid sequence, 131 residues long: uncharacterized protein (131 aa).

Residues 112–131 (LTDNPGAVRKSQKSLIPPYN) form a disordered region.

This is an uncharacterized protein from Fowl adenovirus A serotype 1 (strain CELO / Phelps) (FAdV-1).